The primary structure comprises 421 residues: Probable dual-specificity RNA methyltransferase RlmN (421 aa).

A disordered region spans residues 1–23 (MTATTAESGRPDQPPTAEAGRPV). Glu-127 (proton acceptor) is an active-site residue. A Radical SAM core domain is found at 133–372 (YPDRATVCVS…VTTVRDTRGR (240 aa)). The cysteines at positions 140 and 378 are disulfide-linked. [4Fe-4S] cluster is bound by residues Cys-147, Cys-151, and Cys-154. Residues 202–203 (GE), Ser-236, 259–261 (SLH), and Asn-335 contribute to the S-adenosyl-L-methionine site. Cys-378 serves as the catalytic S-methylcysteine intermediate. Residues 383 to 421 (AEPAGKPERTDRPEQVGSDRLVEFGAVGSTTPDGDRVLR) are disordered. Positions 387-396 (GKPERTDRPE) are enriched in basic and acidic residues.

Belongs to the radical SAM superfamily. RlmN family. Requires [4Fe-4S] cluster as cofactor.

The protein localises to the cytoplasm. It catalyses the reaction adenosine(2503) in 23S rRNA + 2 reduced [2Fe-2S]-[ferredoxin] + 2 S-adenosyl-L-methionine = 2-methyladenosine(2503) in 23S rRNA + 5'-deoxyadenosine + L-methionine + 2 oxidized [2Fe-2S]-[ferredoxin] + S-adenosyl-L-homocysteine. The enzyme catalyses adenosine(37) in tRNA + 2 reduced [2Fe-2S]-[ferredoxin] + 2 S-adenosyl-L-methionine = 2-methyladenosine(37) in tRNA + 5'-deoxyadenosine + L-methionine + 2 oxidized [2Fe-2S]-[ferredoxin] + S-adenosyl-L-homocysteine. Specifically methylates position 2 of adenine 2503 in 23S rRNA and position 2 of adenine 37 in tRNAs. The chain is Probable dual-specificity RNA methyltransferase RlmN from Frankia casuarinae (strain DSM 45818 / CECT 9043 / HFP020203 / CcI3).